The primary structure comprises 238 residues: 1-(5-phosphoribosyl)-5-[(5-phosphoribosylamino)methylideneamino] imidazole-4-carboxamide isomerase (238 aa).

Asp8 functions as the Proton acceptor in the catalytic mechanism. Asp129 functions as the Proton donor in the catalytic mechanism.

It belongs to the HisA/HisF family.

The protein resides in the cytoplasm. It catalyses the reaction 1-(5-phospho-beta-D-ribosyl)-5-[(5-phospho-beta-D-ribosylamino)methylideneamino]imidazole-4-carboxamide = 5-[(5-phospho-1-deoxy-D-ribulos-1-ylimino)methylamino]-1-(5-phospho-beta-D-ribosyl)imidazole-4-carboxamide. It functions in the pathway amino-acid biosynthesis; L-histidine biosynthesis; L-histidine from 5-phospho-alpha-D-ribose 1-diphosphate: step 4/9. The sequence is that of 1-(5-phosphoribosyl)-5-[(5-phosphoribosylamino)methylideneamino] imidazole-4-carboxamide isomerase from Anaeromyxobacter dehalogenans (strain 2CP-1 / ATCC BAA-258).